A 413-amino-acid chain; its full sequence is Acetate kinase (413 aa).

N7 is a Mg(2+) binding site. K14 lines the ATP pocket. R98 contacts substrate. The active-site Proton donor/acceptor is the D157. Residues 216 to 220 (HIGNG), 291 to 293 (DLR), and 339 to 343 (GVGEN) each bind ATP. E392 is a Mg(2+) binding site.

It belongs to the acetokinase family. As to quaternary structure, homodimer. Mg(2+) is required as a cofactor. Requires Mn(2+) as cofactor.

It is found in the cytoplasm. The enzyme catalyses acetate + ATP = acetyl phosphate + ADP. It participates in metabolic intermediate biosynthesis; acetyl-CoA biosynthesis; acetyl-CoA from acetate: step 1/2. Its function is as follows. Catalyzes the formation of acetyl phosphate from acetate and ATP. Can also catalyze the reverse reaction. The protein is Acetate kinase of Synechocystis sp. (strain ATCC 27184 / PCC 6803 / Kazusa).